Consider the following 357-residue polypeptide: MAEFVRAQIFGTTFEITSRYSDLQPVGMGAFGLVCSAKDNLTGQNVAVKKIMKPFSTPVLSKRTYRELKLLKHLRHENVISLSDIFISPLEDIYFVTELLGTDLHRLLTSRPLEKQFIQYFLYQILRGLKYVHSAGVVHRDLKPSNILVNENCDLKICDFGLARIQDPQMTGYVSTRYYRAPEIMLTWQKYDVEVDIWSAGCIFAEMLEGKPLFPGKDHVNQFSIITELLGTPPDDVIHTIASENTLRFVQSLPKRVRQPLKDKFTNADPLAIGLLEEMLVFDPRRRIKATDALAHEYLAPYHDPTDEPIALEKFDWSFNDADLPVDTWKIMMYSEILDYHNVDSENQAMEDPLECP.

Residues 20–299 (YSDLQPVGMG…ATDALAHEYL (280 aa)) enclose the Protein kinase domain. ATP-binding positions include 26–34 (VGMGAFGLV) and K49. D141 serves as the catalytic Proton acceptor. T171 is subject to Phosphothreonine. The TXY motif lies at 171–173 (TGY). Position 173 is a phosphotyrosine (Y173).

Belongs to the protein kinase superfamily. Ser/Thr protein kinase family. MAP kinase subfamily. HOG1 sub-subfamily. It depends on Mg(2+) as a cofactor. In terms of processing, dually phosphorylated on Thr-171 and Tyr-173, which activates the enzyme.

It localises to the cytoplasm. The protein resides in the nucleus. The catalysed reaction is L-seryl-[protein] + ATP = O-phospho-L-seryl-[protein] + ADP + H(+). It carries out the reaction L-threonyl-[protein] + ATP = O-phospho-L-threonyl-[protein] + ADP + H(+). Activated by tyrosine and threonine phosphorylation. In terms of biological role, proline-directed serine/threonine-protein kinase involved in a signal transduction pathway that is activated by changes in the osmolarity of the extracellular environment. Controls osmotic regulation of transcription of target genes. The polypeptide is Mitogen-activated protein kinase HOG1 (HOG1) (Blumeria graminis (Powdery mildew)).